A 163-amino-acid polypeptide reads, in one-letter code: Globin CTT-V (163 aa).

The first 16 residues, 1-16 (MKFFAVLTLCIIGAIA), serve as a signal peptide directing secretion. The region spanning 18–163 (PLTSDEANLV…YTVAFEVIPA (146 aa)) is the Globin domain. Residues H76 and H111 each coordinate heme b.

It belongs to the globin family.

The polypeptide is Globin CTT-V (CTT-V) (Chironomus thummi piger (Midge)).